Here is a 299-residue protein sequence, read N- to C-terminus: Pyridoxal 5'-phosphate synthase subunit PdxS (299 aa).

Residue Asp24 participates in D-ribose 5-phosphate binding. The Schiff-base intermediate with D-ribose 5-phosphate role is filled by Lys81. Position 153 (Gly153) interacts with D-ribose 5-phosphate. A D-glyceraldehyde 3-phosphate-binding site is contributed by Arg165. D-ribose 5-phosphate is bound by residues Gly219 and 240-241 (GS).

This sequence belongs to the PdxS/SNZ family. As to quaternary structure, in the presence of PdxT, forms a dodecamer of heterodimers.

The catalysed reaction is aldehydo-D-ribose 5-phosphate + D-glyceraldehyde 3-phosphate + L-glutamine = pyridoxal 5'-phosphate + L-glutamate + phosphate + 3 H2O + H(+). It functions in the pathway cofactor biosynthesis; pyridoxal 5'-phosphate biosynthesis. Its function is as follows. Catalyzes the formation of pyridoxal 5'-phosphate from ribose 5-phosphate (RBP), glyceraldehyde 3-phosphate (G3P) and ammonia. The ammonia is provided by the PdxT subunit. Can also use ribulose 5-phosphate and dihydroxyacetone phosphate as substrates, resulting from enzyme-catalyzed isomerization of RBP and G3P, respectively. This chain is Pyridoxal 5'-phosphate synthase subunit PdxS, found in Methanococcus maripaludis (strain DSM 14266 / JCM 13030 / NBRC 101832 / S2 / LL).